Consider the following 241-residue polypeptide: Large ribosomal subunit protein uL3 (241 aa).

Disordered regions lie at residues 139–166 (VSHR…PGHM) and 214–241 (ADAP…QEGA). Q151 is subject to N5-methylglutamine. Low complexity predominate over residues 229–241 (AAAEAPAAEQEGA).

Part of the 50S ribosomal subunit. Forms a cluster with proteins L14 and L19. In terms of processing, methylated, on either Lys-155 or Lys-158. Post-translationally, methylated by PrmB.

One of the primary rRNA binding proteins, it binds directly near the 3'-end of the 23S rRNA, where it nucleates assembly of the 50S subunit. The chain is Large ribosomal subunit protein uL3 from Rhodopseudomonas palustris (strain ATCC BAA-98 / CGA009).